The chain runs to 155 residues: SsrA-binding protein (155 aa).

Residues Lys-132–Arg-147 are compositionally biased toward basic and acidic residues. The interval Lys-132–Arg-155 is disordered.

Belongs to the SmpB family.

It localises to the cytoplasm. In terms of biological role, required for rescue of stalled ribosomes mediated by trans-translation. Binds to transfer-messenger RNA (tmRNA), required for stable association of tmRNA with ribosomes. tmRNA and SmpB together mimic tRNA shape, replacing the anticodon stem-loop with SmpB. tmRNA is encoded by the ssrA gene; the 2 termini fold to resemble tRNA(Ala) and it encodes a 'tag peptide', a short internal open reading frame. During trans-translation Ala-aminoacylated tmRNA acts like a tRNA, entering the A-site of stalled ribosomes, displacing the stalled mRNA. The ribosome then switches to translate the ORF on the tmRNA; the nascent peptide is terminated with the 'tag peptide' encoded by the tmRNA and targeted for degradation. The ribosome is freed to recommence translation, which seems to be the essential function of trans-translation. This is SsrA-binding protein from Streptococcus mutans serotype c (strain ATCC 700610 / UA159).